The following is a 198-amino-acid chain: Na(+)-translocating NADH-quinone reductase subunit E (198 aa).

6 helical membrane passes run Ser11–Val31, Val35–Val55, Phe77–Val97, Gly110–Val130, Val140–Ile160, and Leu176–Ile196.

It belongs to the NqrDE/RnfAE family. In terms of assembly, composed of six subunits; NqrA, NqrB, NqrC, NqrD, NqrE and NqrF.

The protein resides in the cell inner membrane. It catalyses the reaction a ubiquinone + n Na(+)(in) + NADH + H(+) = a ubiquinol + n Na(+)(out) + NAD(+). Its function is as follows. NQR complex catalyzes the reduction of ubiquinone-1 to ubiquinol by two successive reactions, coupled with the transport of Na(+) ions from the cytoplasm to the periplasm. NqrA to NqrE are probably involved in the second step, the conversion of ubisemiquinone to ubiquinol. This is Na(+)-translocating NADH-quinone reductase subunit E from Pasteurella multocida (strain Pm70).